The following is a 287-amino-acid chain: Large ribosomal subunit protein uL2 (287 aa).

The disordered stretch occupies residues 221-287 (RGSVMNPCDH…SKRSRGGRDS (67 aa)). Over residues 258-287 (KTRKKNKPSNKLVVRRRRRISKRSRGGRDS) the composition is skewed to basic residues.

Belongs to the universal ribosomal protein uL2 family. In terms of assembly, part of the 50S ribosomal subunit. Forms a bridge to the 30S subunit in the 70S ribosome.

In terms of biological role, one of the primary rRNA binding proteins. Required for association of the 30S and 50S subunits to form the 70S ribosome, for tRNA binding and peptide bond formation. It has been suggested to have peptidyltransferase activity; this is somewhat controversial. Makes several contacts with the 16S rRNA in the 70S ribosome. This Prochlorococcus marinus subsp. pastoris (strain CCMP1986 / NIES-2087 / MED4) protein is Large ribosomal subunit protein uL2.